Consider the following 361-residue polypeptide: Peptide chain release factor 1 (361 aa).

Residue Gln238 is modified to N5-methylglutamine.

It belongs to the prokaryotic/mitochondrial release factor family. In terms of processing, methylated by PrmC. Methylation increases the termination efficiency of RF1.

It localises to the cytoplasm. Functionally, peptide chain release factor 1 directs the termination of translation in response to the peptide chain termination codons UAG and UAA. The chain is Peptide chain release factor 1 from Mesomycoplasma hyopneumoniae (strain 232) (Mycoplasma hyopneumoniae).